We begin with the raw amino-acid sequence, 148 residues long: MF7 protein (148 aa).

In Myxoma virus (strain Lausanne) (MYXV), this protein is MF7 protein.